Reading from the N-terminus, the 215-residue chain is Large ribosomal subunit protein uL3c (215 aa).

A disordered region spans residues 132–151; sequence RGAMSHGSKSHRRPGSIGAG.

This sequence belongs to the universal ribosomal protein uL3 family. Part of the 50S ribosomal subunit.

The protein localises to the plastid. It is found in the chloroplast. Its function is as follows. One of the primary rRNA binding proteins, it binds directly near the 3'-end of the 23S rRNA, where it nucleates assembly of the 50S subunit. In Cyanidium caldarium (Red alga), this protein is Large ribosomal subunit protein uL3c (rpl3).